The primary structure comprises 176 residues: MARENRDTQPNDGMQEKLIHINRVSKVVKGGRQFGFAALMVVGDGDGKVGFGRGKAKEVPAGIQKATDQARRWMTSIPLMRGGTIPYPVEGRHGAARVMLRPAPEGSGVIAGGAMRAVCEAVGLRNVVAKSLGSNNPINVVRATFDAFDKLISPQAIAMKRGKSLKEIRGQGGHDE.

One can recognise an S5 DRBM domain in the interval 14–77 (MQEKLIHINR…DQARRWMTSI (64 aa)).

The protein belongs to the universal ribosomal protein uS5 family. Part of the 30S ribosomal subunit. Contacts proteins S4 and S8.

Its function is as follows. With S4 and S12 plays an important role in translational accuracy. Functionally, located at the back of the 30S subunit body where it stabilizes the conformation of the head with respect to the body. The sequence is that of Small ribosomal subunit protein uS5 from Acidithiobacillus ferrooxidans (strain ATCC 23270 / DSM 14882 / CIP 104768 / NCIMB 8455) (Ferrobacillus ferrooxidans (strain ATCC 23270)).